The sequence spans 95 residues: Aspartyl/glutamyl-tRNA(Asn/Gln) amidotransferase subunit C (95 aa).

This sequence belongs to the GatC family. In terms of assembly, heterotrimer of A, B and C subunits.

It carries out the reaction L-glutamyl-tRNA(Gln) + L-glutamine + ATP + H2O = L-glutaminyl-tRNA(Gln) + L-glutamate + ADP + phosphate + H(+). The enzyme catalyses L-aspartyl-tRNA(Asn) + L-glutamine + ATP + H2O = L-asparaginyl-tRNA(Asn) + L-glutamate + ADP + phosphate + 2 H(+). Its function is as follows. Allows the formation of correctly charged Asn-tRNA(Asn) or Gln-tRNA(Gln) through the transamidation of misacylated Asp-tRNA(Asn) or Glu-tRNA(Gln) in organisms which lack either or both of asparaginyl-tRNA or glutaminyl-tRNA synthetases. The reaction takes place in the presence of glutamine and ATP through an activated phospho-Asp-tRNA(Asn) or phospho-Glu-tRNA(Gln). In Brucella anthropi (strain ATCC 49188 / DSM 6882 / CCUG 24695 / JCM 21032 / LMG 3331 / NBRC 15819 / NCTC 12168 / Alc 37) (Ochrobactrum anthropi), this protein is Aspartyl/glutamyl-tRNA(Asn/Gln) amidotransferase subunit C.